The sequence spans 112 residues: Protein lin-52 homolog (112 aa).

Belongs to the lin-52 family. Component of the DREAM complex.

The polypeptide is Protein lin-52 homolog (lin52) (Danio rerio (Zebrafish)).